The chain runs to 447 residues: Zinc finger protein ZIC 1 (447 aa).

Residues 225 to 260 (LICKWIEPEQLANPKKSCNKTFSTMHELVTHVTVEH) form a C2H2-type 1; atypical zinc finger. A C2H2-type 2; atypical zinc finger spans residues 269–296 (HICFWEECPREGKPFKAKYKLVNHIRVH). C2H2-type zinc fingers lie at residues 302-326 (FPCP…KRTH), 332-356 (FKCE…MHVH), and 362-384 (YLCK…MKVH). The interval 375–431 (SSLRKHMKVHESSSQGSQPSPAASSGYESSTPPTIVSPSTDNPTTSSLSPSSSAVHH) is disordered. The segment covering 386–427 (SSSQGSQPSPAASSGYESSTPPTIVSPSTDNPTTSSLSPSSS) has biased composition (low complexity).

It belongs to the GLI C2H2-type zinc-finger protein family. As to quaternary structure, interacts (via the C2H2-type domains 3, 4 and 5) with MDFIC (via the C2H2-type domains 3, 4 and 5). Interacts with GLI1; the interaction enhances transcription activation. Interacts with GLI2. Interacts with GLI3; the interaction enhances transcription activation. As to expression, CNS. A high level expression is seen in the cerebellum. Detected in the nuclei of the cerebellar granule cell lineage from the progenitor cells of the external germinal layer to the postmigrated cells of the internal granular layer. Detected in medulloblastoma (26/29 cases), but not present in all other tumors examined.

It localises to the nucleus. The protein localises to the cytoplasm. Its function is as follows. Acts as a transcriptional activator. Involved in neurogenesis. Plays important roles in the early stage of organogenesis of the CNS, as well as during dorsal spinal cord development and maturation of the cerebellum. Involved in the spatial distribution of mossy fiber (MF) neurons within the pontine gray nucleus (PGN). Plays a role in the regulation of MF axon pathway choice. Promotes MF migration towards ipsilaterally-located cerebellar territories. May have a role in shear flow mechanotransduction in osteocytes. Retains nuclear GLI1 and GLI3 in the cytoplasm. Binds to the minimal GLI-consensus sequence 5'-TGGGTGGTC-3'. This Homo sapiens (Human) protein is Zinc finger protein ZIC 1 (ZIC1).